We begin with the raw amino-acid sequence, 88 residues long: Small ribosomal subunit protein uS15 (88 aa).

This sequence belongs to the universal ribosomal protein uS15 family. Part of the 30S ribosomal subunit. Forms a bridge to the 50S subunit in the 70S ribosome, contacting the 23S rRNA.

In terms of biological role, one of the primary rRNA binding proteins, it binds directly to 16S rRNA where it helps nucleate assembly of the platform of the 30S subunit by binding and bridging several RNA helices of the 16S rRNA. Its function is as follows. Forms an intersubunit bridge (bridge B4) with the 23S rRNA of the 50S subunit in the ribosome. The protein is Small ribosomal subunit protein uS15 of Psychrobacter arcticus (strain DSM 17307 / VKM B-2377 / 273-4).